A 540-amino-acid polypeptide reads, in one-letter code: Cytochrome bc1 complex cytochrome b subunit (540 aa).

A helical membrane pass occupies residues 40–60; sequence EIALYSFIILLLTGVYLTLFF. The heme site is built by histidine 105 and histidine 119. 3 helical membrane-spanning segments follow: residues 109 to 129, 137 to 157, and 169 to 189; these read ALTF…TGAF, WIIG…GYSL, and IMSA…WLIF. Heme is bound by residues histidine 206 and histidine 221. Transmembrane regions (helical) follow at residues 207–227, 259–279, 325–345, 371–391, and 408–428; these read VLII…LVWY, FGLV…INAI, AFWV…YPFI, LGVM…NDLF, and IGLI…CLGL.

This sequence belongs to the cytochrome b family. As to quaternary structure, the cytochrome bc1 complex is composed of a cytochrome b (QcrB), the Rieske protein iron-sulfur (QcrA) and a diheme cytochrome c (QcrC) subunit. It depends on heme as a cofactor.

The protein localises to the cell membrane. The catalysed reaction is a quinol + 2 Fe(III)-[cytochrome c](out) = a quinone + 2 Fe(II)-[cytochrome c](out) + 2 H(+)(out). Functionally, cytochrome b subunit of the cytochrome bc1 complex, an essential component of the respiratory electron transport chain required for ATP synthesis. The bc1 complex catalyzes the oxidation of menaquinol and the reduction of cytochrome c in the respiratory chain. The bc1 complex operates through a Q-cycle mechanism that couples electron transfer to generation of the proton gradient that drives ATP synthesis. This is Cytochrome bc1 complex cytochrome b subunit (qcrB) from Corynebacterium diphtheriae (strain ATCC 700971 / NCTC 13129 / Biotype gravis).